The sequence spans 229 residues: Ribosome maturation factor RimM (229 aa).

The tract at residues 1 to 37 (MAGHDSGNAKRGRSPSFGVFVRKPVERTSAKGTSDGA) is disordered. One can recognise a PRC barrel domain in the interval 148–229 (ADEFYWVDLI…RVVVDWEADY (82 aa)).

Belongs to the RimM family. As to quaternary structure, binds ribosomal protein uS19.

Its subcellular location is the cytoplasm. In terms of biological role, an accessory protein needed during the final step in the assembly of 30S ribosomal subunit, possibly for assembly of the head region. Essential for efficient processing of 16S rRNA. May be needed both before and after RbfA during the maturation of 16S rRNA. It has affinity for free ribosomal 30S subunits but not for 70S ribosomes. The chain is Ribosome maturation factor RimM from Burkholderia pseudomallei (strain 668).